Reading from the N-terminus, the 302-residue chain is Large ribosomal subunit protein uL29m (302 aa).

The N-terminal 38 residues, 1 to 38, are a transit peptide targeting the mitochondrion; sequence MASSGAARPAASRVLQRCQPFSSSTSCAAPVTTWRTLA. The interval 255-302 is disordered; the sequence is EPVADHLETPETSGQEKVGELSPAGAVDPSTILASKTGKPVTDAPRSS.

The protein belongs to the universal ribosomal protein uL29 family. Component of the mitochondrial large ribosomal subunit. Mature mitochondrial ribosomes consist of a small (37S) and a large (54S) subunit. The 37S subunit contains at least 33 different proteins and 1 molecule of RNA (15S). The 54S subunit contains at least 45 different proteins and 1 molecule of RNA (21S).

It localises to the mitochondrion. The chain is Large ribosomal subunit protein uL29m (MRPL4) from Pyricularia oryzae (strain 70-15 / ATCC MYA-4617 / FGSC 8958) (Rice blast fungus).